A 477-amino-acid polypeptide reads, in one-letter code: Glutamyl-tRNA(Gln) amidotransferase subunit A (477 aa).

Active-site charge relay system residues include K76 and S151. S175 (acyl-ester intermediate) is an active-site residue.

It belongs to the amidase family. GatA subfamily. As to quaternary structure, heterotrimer of A, B and C subunits.

It catalyses the reaction L-glutamyl-tRNA(Gln) + L-glutamine + ATP + H2O = L-glutaminyl-tRNA(Gln) + L-glutamate + ADP + phosphate + H(+). Its function is as follows. Allows the formation of correctly charged Gln-tRNA(Gln) through the transamidation of misacylated Glu-tRNA(Gln) in organisms which lack glutaminyl-tRNA synthetase. The reaction takes place in the presence of glutamine and ATP through an activated gamma-phospho-Glu-tRNA(Gln). The chain is Glutamyl-tRNA(Gln) amidotransferase subunit A from Prosthecochloris aestuarii (strain DSM 271 / SK 413).